Consider the following 134-residue polypeptide: Profilin-1 (134 aa).

C13 and C118 are oxidised to a cystine. An Involved in PIP2 interaction motif is present at residues A84–T100. At T114 the chain carries Phosphothreonine.

The protein belongs to the profilin family. Occurs in many kinds of cells as a complex with monomeric actin in a 1:1 ratio. Phosphorylated by MAP kinases.

Its subcellular location is the cytoplasm. It is found in the cytoskeleton. Binds to actin and affects the structure of the cytoskeleton. At high concentrations, profilin prevents the polymerization of actin, whereas it enhances it at low concentrations. This is Profilin-1 from Olea europaea (Common olive).